Reading from the N-terminus, the 328-residue chain is Delta-aminolevulinic acid dehydratase (328 aa).

Lys200 serves as the catalytic Schiff-base intermediate with substrate. 5-aminolevulinate is bound by residues Arg210 and Lys222. Mg(2+) is bound at residue Glu238. Residue Lys253 is the Schiff-base intermediate with substrate of the active site. Ser279 and Tyr318 together coordinate 5-aminolevulinate.

It belongs to the ALAD family. Homooctamer.

The catalysed reaction is 2 5-aminolevulinate = porphobilinogen + 2 H2O + H(+). It participates in porphyrin-containing compound metabolism; protoporphyrin-IX biosynthesis; coproporphyrinogen-III from 5-aminolevulinate: step 1/4. Its activity is regulated as follows. Stimulated by magnesium, inhibited by zinc. In terms of biological role, catalyzes an early step in the biosynthesis of tetrapyrroles. Binds two molecules of 5-aminolevulinate per subunit, each at a distinct site, and catalyzes their condensation to form porphobilinogen. The protein is Delta-aminolevulinic acid dehydratase (hemB) of Chlorobaculum tepidum (strain ATCC 49652 / DSM 12025 / NBRC 103806 / TLS) (Chlorobium tepidum).